A 103-amino-acid chain; its full sequence is UPF0145 protein BT9727_3206 (103 aa).

This sequence belongs to the UPF0145 family.

The chain is UPF0145 protein BT9727_3206 from Bacillus thuringiensis subsp. konkukian (strain 97-27).